The following is a 461-amino-acid chain: Polycomb group protein FIE1 (461 aa).

Positions 1-11 (MPPSKARRKRS) are enriched in basic residues. The segment at 1-56 (MPPSKARRKRSLRDITATVATGTVANSKPGSSSTNEGKQQDKKKEGPQEPDIPPLP) is disordered. Residues 18 to 37 (TVATGTVANSKPGSSSTNEG) are compositionally biased toward polar residues. The segment covering 38-47 (KQQDKKKEGP) has biased composition (basic and acidic residues). WD repeat units lie at residues 143-186 (DKDE…LDKS), 189-229 (GHGG…CILV), 235-275 (GHRH…IYVE), 301-338 (VHSDYVDCTRWLGDFILSKSVKNAVLLWEPKPDKRRPG), 351-391 (PKCS…PVLI), and 398-437 (ECKSPIRQTAVSFDGSTILGAADDGAIWRWDEVDPAASSS). The disordered stretch occupies residues 429–461 (EVDPAASSSKPDQAAAPAAGVGAGAGADADADA). Residues 432 to 448 (PAASSSKPDQAAAPAAG) show a composition bias toward low complexity.

Belongs to the WD repeat ESC family. As to expression, specifically expressed in kernel starting from 6 days after pollination.

Its subcellular location is the nucleus. Functionally, polycomb group (PcG) protein. PcG proteins act by forming multiprotein complexes, which are required to maintain the transcriptionally repressive state of homeotic genes throughout development. PcG proteins are not required to initiate repression, but to maintain it during later stages of development. They probably act via the methylation of histones, rendering chromatin heritably changed in its expressibility. This Zea mays (Maize) protein is Polycomb group protein FIE1 (FIE1).